Reading from the N-terminus, the 1308-residue chain is MAWLWLLCALLPAFMVSVTANSPPSFGVNMTLVTLPEDLPVGAVAFWLVATDSDNDHLTYGISGPNASYFSVNANTGEVKLASPLDFETVPFFKITISTSDGLNIRTAEMQVIVEDRNDNIPVFLNTEFSTSINETLPVGSVVFSVLAEDKDTGTAGLVQYFIEKVIPSTANSNNLFRILENGSIVLNDTLSYNNKSAFYQLELKACDSGGILDNKPKTQCSQPVFVSISVIDEPDLDPRFIREFYSASVAEDATLGTSVLTVEAVDSDKGINDIVTYSVSNSTRPGWFDIREDGVIFVNGSLDREQLLLENEEVQIQVTATEKNLNIYGQEAKASMWVTIRVTDVNDHKPEFYNCSLPGCSFSPQEAQVNFIGYVDEHASARISIDGLTMVAYDPDQGDNGTFLLSLNGQDAEAFNVSPERAAGSVSVQVVVRNSEMVDYEKETVMVVEVVATDSVSNNYSVATVTIHLRNINDHRPVFSQSLYELTVPEHCPTGYLVTDKIQATDLDGDEWGPITYSLLPGNGADLFEVEPNSGNLTVKNGTLLDREKQAVYYLTLQATDGGNQSTTTALEITLLDINDNPPVVRGSYNVFVPEENGNVSVTIQAYDDDQPDTNNSLLVFSLLPGPYSSNFSLDPNTGLLRNLGPLDREAIDPALEGRIVLTVIVADCGEPSLSTNVNVTITVEDINDNLPVFNQSYEFSVWERVPGAWVGTVKAWDADQTAANNRISFSLSGTGANNFILQGNVLEQGWAEGSLWLLPDVRLDYETQKFFHLTVSAENPGPQGLDSTANVTVTVMDVNDEPPTLDAASLQAISVTENGSEHGQVTRVIAQDVDTAALLRIELVDVICTKAGVDVGSVCHGWFSVDGNGSVYINQSEAIDYEACHLVTLVVRAYDLNTDPGFDAYSSNGSLLINIKDKNDNAPYFLPNNQTFVIIPELVLPNQQVASVQARDEDSEDNGIIMFSILKAEFVRKDGTSNPVQVFRITRSVEAGLFTGSIELVTNLDSTIQGTYQVTVQAQDQPTLGPALETQTTLNLFTVDQSYRVRLQFSTSKEDVGANMEEIKEALIQATRTSVYVVTIQNIDSTARARASSYMDAYFVFSNGTALTLTELNMMIRKDQDALRQLLQLGLVVVSSQESQEPDQQKLLTSVIIGLVVSLVLVLVILITALVCLRKSYHRKLRAMKAGKEARKTPIETTAPTAAIPGTNMYNTDRANPVLDLPTKDLGLECHSSSDLDYDSLNSLDENSVDLDMDSKEFKRKDLPGDPPEPDPEPLTAVLSGRSAGASEQQKKNLSFTNPGLDTTDL.

The first 20 residues, 1–20 (MAWLWLLCALLPAFMVSVTA), serve as a signal peptide directing secretion. At 21 to 1152 (NSPPSFGVNM…EPDQQKLLTS (1132 aa)) the chain is on the extracellular side. 9 Cadherin domains span residues 33-124 (VTLP…IPVF), 125-241 (LNTE…DPRF), 242-353 (IREF…KPEF), 368-480 (AQVN…RPVF), 481-586 (SQSL…PPVV), 586-695 (VRGS…LPVF), 695-807 (FNQS…PPTL), 809-927 (AASL…APYF), and 929-1051 (PNNQ…RLQF). A helical transmembrane segment spans residues 1153–1173 (VIIGLVVSLVLVLVILITALV). Residues 1174–1308 (CLRKSYHRKL…TNPGLDTTDL (135 aa)) are Cytoplasmic-facing. The interval 1178–1308 (SYHRKLRAMK…TNPGLDTTDL (131 aa)) is mediates interaction with USH1C and MYO7B and is required for proper localization to microvilli tips and function in microvilli organization. A Phosphoserine modification is found at Ser-1245. The interval 1251–1308 (VDLDMDSKEFKRKDLPGDPPEPDPEPLTAVLSGRSAGASEQQKKNLSFTNPGLDTTDL) is disordered. Positions 1255–1266 (MDSKEFKRKDLP) are enriched in basic and acidic residues. Residues 1288–1308 (ASEQQKKNLSFTNPGLDTTDL) show a composition bias toward polar residues. Ser-1297 is modified (phosphoserine).

Part of the IMAC/intermicrovillar adhesion complex/intermicrovillar tip-link complex composed of ANKS4B, MYO7B, USH1C, CDHR2 and CDHR5. Interacts with MAST2. Interacts (via cytoplasmic domain) with USH1C and MYO7B; required for proper localization of CDHR2 to microvilli tips and its function in brush border differentiation.

Its subcellular location is the apical cell membrane. It localises to the cell projection. The protein resides in the microvillus membrane. It is found in the cell junction. In terms of biological role, intermicrovillar adhesion molecule that forms, via its extracellular domain, calcium-dependent heterophilic complexes with CDHR5 on adjacent microvilli. Thereby, controls the packing of microvilli at the apical membrane of epithelial cells. Through its cytoplasmic domain, interacts with microvillus cytoplasmic proteins to form the intermicrovillar adhesion complex/IMAC. This complex plays a central role in microvilli and epithelial brush border differentiation. May also play a role in cell-cell adhesion and contact inhibition in epithelial cells. This chain is Cadherin-related family member 2, found in Mus musculus (Mouse).